Consider the following 290-residue polypeptide: uncharacterized protein (290 aa).

7 consecutive transmembrane segments (helical) span residues 40-60 (MHVILLSALFYQIINILSPVI), 80-100 (DAHVVSSVQSIVLICLGYTCL), 110-130 (LFGYSVVAGDIYALTAGYFVW), 139-159 (VHITGIGFVIHAIAALFVITF), 166-188 (MYYGPTYLSWELSTPFLNIHYFL), 200-220 (MINGFILIVTFICVRIAWGWF), and 238-260 (WALSLFYLAANMSLNCLNLFWVS). The TLC domain maps to 74-271 (KTRLNWDAHV…MIDAIRRRAH (198 aa)).

The protein localises to the endoplasmic reticulum membrane. This is an uncharacterized protein from Schizosaccharomyces pombe (strain 972 / ATCC 24843) (Fission yeast).